Here is a 206-residue protein sequence, read N- to C-terminus: Ribosome maturation factor RimP (206 aa).

The disordered stretch occupies residues 164–206; the sequence is GGIPEGRAVPSDAVDLTDDSGVDSVEDDEAELEDVENEEGFDK. Residues 178 to 206 show a composition bias toward acidic residues; it reads DLTDDSGVDSVEDDEAELEDVENEEGFDK.

The protein belongs to the RimP family.

The protein resides in the cytoplasm. Its function is as follows. Required for maturation of 30S ribosomal subunits. This is Ribosome maturation factor RimP from Rhodococcus erythropolis (strain PR4 / NBRC 100887).